A 510-amino-acid polypeptide reads, in one-letter code: 2,3-bisphosphoglycerate-independent phosphoglycerate mutase (510 aa).

Mn(2+)-binding residues include aspartate 13 and serine 63. The active-site Phosphoserine intermediate is the serine 63. Substrate contacts are provided by residues histidine 124, 154-155 (RD), arginine 186, arginine 192, 262-265 (RADR), and lysine 334. Mn(2+)-binding residues include aspartate 401, histidine 405, aspartate 442, histidine 443, and histidine 461.

This sequence belongs to the BPG-independent phosphoglycerate mutase family. As to quaternary structure, monomer. It depends on Mn(2+) as a cofactor.

The catalysed reaction is (2R)-2-phosphoglycerate = (2R)-3-phosphoglycerate. It participates in carbohydrate degradation; glycolysis; pyruvate from D-glyceraldehyde 3-phosphate: step 3/5. Catalyzes the interconversion of 2-phosphoglycerate and 3-phosphoglycerate. The polypeptide is 2,3-bisphosphoglycerate-independent phosphoglycerate mutase (Aliivibrio fischeri (strain ATCC 700601 / ES114) (Vibrio fischeri)).